We begin with the raw amino-acid sequence, 97 residues long: Large ribosomal subunit protein bL27 (97 aa).

Positions 1–12 are excised as a propeptide; that stretch reads MIKLNLSNLQHF. Residues 13–38 are disordered; sequence AHKKGGGSTSNGRDSQAKRLGAKAAD.

Belongs to the bacterial ribosomal protein bL27 family. Post-translationally, the N-terminus is cleaved by ribosomal processing cysteine protease Prp.

The polypeptide is Large ribosomal subunit protein bL27 (Streptococcus equi subsp. equi (strain 4047)).